The chain runs to 273 residues: Formamidopyrimidine-DNA glycosylase (273 aa).

P2 serves as the catalytic Schiff-base intermediate with DNA. E3 functions as the Proton donor in the catalytic mechanism. K60 acts as the Proton donor; for beta-elimination activity in catalysis. 3 residues coordinate DNA: H94, R113, and R154. An FPG-type zinc finger spans residues 239 to 273 (NAYDREGQPCPRCGATIIKTVVAQRGTHYCPECQR). R263 functions as the Proton donor; for delta-elimination activity in the catalytic mechanism.

It belongs to the FPG family. As to quaternary structure, monomer. Zn(2+) serves as cofactor.

The enzyme catalyses Hydrolysis of DNA containing ring-opened 7-methylguanine residues, releasing 2,6-diamino-4-hydroxy-5-(N-methyl)formamidopyrimidine.. It catalyses the reaction 2'-deoxyribonucleotide-(2'-deoxyribose 5'-phosphate)-2'-deoxyribonucleotide-DNA = a 3'-end 2'-deoxyribonucleotide-(2,3-dehydro-2,3-deoxyribose 5'-phosphate)-DNA + a 5'-end 5'-phospho-2'-deoxyribonucleoside-DNA + H(+). Its function is as follows. Involved in base excision repair of DNA damaged by oxidation or by mutagenic agents. Acts as a DNA glycosylase that recognizes and removes damaged bases. Has a preference for oxidized purines, such as 7,8-dihydro-8-oxoguanine (8-oxoG). Has AP (apurinic/apyrimidinic) lyase activity and introduces nicks in the DNA strand. Cleaves the DNA backbone by beta-delta elimination to generate a single-strand break at the site of the removed base with both 3'- and 5'-phosphates. The sequence is that of Formamidopyrimidine-DNA glycosylase from Roseiflexus sp. (strain RS-1).